We begin with the raw amino-acid sequence, 375 residues long: Methylthioribose-1-phosphate isomerase (375 aa).

The active-site Proton donor is D257.

This sequence belongs to the eIF-2B alpha/beta/delta subunits family. MtnA subfamily.

It localises to the cytoplasm. The protein resides in the nucleus. The enzyme catalyses 5-(methylsulfanyl)-alpha-D-ribose 1-phosphate = 5-(methylsulfanyl)-D-ribulose 1-phosphate. It participates in amino-acid biosynthesis; L-methionine biosynthesis via salvage pathway; L-methionine from S-methyl-5-thio-alpha-D-ribose 1-phosphate: step 1/6. Functionally, catalyzes the interconversion of methylthioribose-1-phosphate (MTR-1-P) into methylthioribulose-1-phosphate (MTRu-1-P). The sequence is that of Methylthioribose-1-phosphate isomerase from Leishmania major.